The chain runs to 139 residues: Protein cornichon homolog 4 (139 aa).

Helical transmembrane passes span 5 to 25 (VFLF…YFII), 57 to 77 (IVTV…NLPV), and 118 to 138 (LGFY…ALIN).

Belongs to the cornichon family. Interacts with Sec23/24 complex components SEC24B and SEC24D. Interacts with CCR5. Interacts with ADRB2 in the early secretory pathway.

It is found in the membrane. Its subcellular location is the endoplasmic reticulum. It localises to the endoplasmic reticulum-Golgi intermediate compartment. Its function is as follows. Involved in G protein-coupled receptors (GPCRs) trafficking from the endoplasmic reticulum to the cell surface; it promotes the exit of GPCRs from the early secretory pathway, likely through interaction with the COPII machinery. The chain is Protein cornichon homolog 4 (Cnih4) from Mus musculus (Mouse).